A 625-amino-acid polypeptide reads, in one-letter code: Probable potassium transport system protein Kup 2 (625 aa).

Transmembrane regions (helical) follow at residues 15-35 (LSFA…LYAF), 52-72 (ILSL…LVIV), 98-118 (GGWL…DGIL), 134-154 (LSPN…FFLF), 164-184 (IGIY…VLGF), 203-223 (IYFF…VFLV), 246-266 (WFAV…AFVL), 284-304 (FLPV…QAII), 336-356 (VYLP…VVIF), 365-385 (AYGI…GIIA), 394-414 (FKVM…AGNI), and 417-437 (LLTG…VMYT).

It belongs to the HAK/KUP transporter (TC 2.A.72) family.

It is found in the cell inner membrane. The enzyme catalyses K(+)(in) + H(+)(in) = K(+)(out) + H(+)(out). In terms of biological role, transport of potassium into the cell. Likely operates as a K(+):H(+) symporter. This Legionella pneumophila subsp. pneumophila (strain Philadelphia 1 / ATCC 33152 / DSM 7513) protein is Probable potassium transport system protein Kup 2.